The following is a 259-amino-acid chain: Deoxyribose-phosphate aldolase (259 aa).

The active-site Proton donor/acceptor is Asp-102. Residue Lys-167 is the Schiff-base intermediate with acetaldehyde of the active site. Lys-201 acts as the Proton donor/acceptor in catalysis.

It belongs to the DeoC/FbaB aldolase family. DeoC type 2 subfamily.

The protein resides in the cytoplasm. It catalyses the reaction 2-deoxy-D-ribose 5-phosphate = D-glyceraldehyde 3-phosphate + acetaldehyde. Its pathway is carbohydrate degradation; 2-deoxy-D-ribose 1-phosphate degradation; D-glyceraldehyde 3-phosphate and acetaldehyde from 2-deoxy-alpha-D-ribose 1-phosphate: step 2/2. Functionally, catalyzes a reversible aldol reaction between acetaldehyde and D-glyceraldehyde 3-phosphate to generate 2-deoxy-D-ribose 5-phosphate. This chain is Deoxyribose-phosphate aldolase, found in Klebsiella pneumoniae (strain 342).